A 388-amino-acid chain; its full sequence is Phosphoglycerate kinase (388 aa).

Substrate contacts are provided by residues 21–23 (DLN), Arg36, 59–62 (HLGR), Arg114, and Arg147. ATP contacts are provided by residues Lys198, Glu315, and 341-344 (GGDT).

It belongs to the phosphoglycerate kinase family. As to quaternary structure, monomer.

It is found in the cytoplasm. The catalysed reaction is (2R)-3-phosphoglycerate + ATP = (2R)-3-phospho-glyceroyl phosphate + ADP. It participates in carbohydrate degradation; glycolysis; pyruvate from D-glyceraldehyde 3-phosphate: step 2/5. In Hahella chejuensis (strain KCTC 2396), this protein is Phosphoglycerate kinase.